Here is a 448-residue protein sequence, read N- to C-terminus: Alginate biosynthesis transcriptional regulatory protein AlgB (448 aa).

One can recognise a Response regulatory domain in the interval 10-124 (RILLVDDESA…QLRLATAKQL (115 aa)). Asp-59 carries the post-translational modification 4-aspartylphosphate. A Sigma-54 factor interaction domain is found at 147–376 (LDSHSPAMMA…LRNVVERASI (230 aa)). Residues 175 to 182 (GESGTGKG) and 238 to 247 (ADGGTLFLDE) contribute to the ATP site. A DNA-binding region (H-T-H motif) is located at residues 425 to 444 (LDQAAKTLGIDASTLYRKRK).

It functions in the pathway glycan biosynthesis; alginate biosynthesis [regulation]. Its function is as follows. Positive regulator of the alginate biosynthetic gene algD. The sequence is that of Alginate biosynthesis transcriptional regulatory protein AlgB (algB) from Pseudomonas putida (strain ATCC 47054 / DSM 6125 / CFBP 8728 / NCIMB 11950 / KT2440).